A 334-amino-acid chain; its full sequence is Transaldolase (334 aa).

An N-acetylserine modification is found at serine 2. Lysine 143 functions as the Schiff-base intermediate with substrate in the catalytic mechanism.

Belongs to the transaldolase family. Type 1 subfamily. Homodimer.

The enzyme catalyses D-sedoheptulose 7-phosphate + D-glyceraldehyde 3-phosphate = D-erythrose 4-phosphate + beta-D-fructose 6-phosphate. It participates in carbohydrate degradation; pentose phosphate pathway; D-glyceraldehyde 3-phosphate and beta-D-fructose 6-phosphate from D-ribose 5-phosphate and D-xylulose 5-phosphate (non-oxidative stage): step 2/3. Functionally, transaldolase is important for the balance of metabolites in the pentose-phosphate pathway. The sequence is that of Transaldolase (TAL1) from Kluyveromyces lactis (strain ATCC 8585 / CBS 2359 / DSM 70799 / NBRC 1267 / NRRL Y-1140 / WM37) (Yeast).